The primary structure comprises 299 residues: Probable 3-hydroxyisobutyrate dehydrogenase-like 2, mitochondrial (299 aa).

NAD(+) contacts are provided by residues 14–43 (TRIG…TVYA) and Ser-108. Lys-182 is a catalytic residue. Lys-250 serves as a coordination point for NAD(+).

This sequence belongs to the HIBADH-related family. 3-hydroxyisobutyrate dehydrogenase subfamily.

The protein localises to the mitochondrion. The catalysed reaction is 3-hydroxy-2-methylpropanoate + NAD(+) = 2-methyl-3-oxopropanoate + NADH + H(+). It functions in the pathway amino-acid degradation; L-valine degradation. This is Probable 3-hydroxyisobutyrate dehydrogenase-like 2, mitochondrial from Arabidopsis thaliana (Mouse-ear cress).